A 138-amino-acid chain; its full sequence is MRTLWIMAVLLLGVEGNLLQFRKMIKKMTGKEPILSYATYGCNCGMAGVGQPVDGTDRCCFVHNCCYEKVTSCSPKWDQYIYSWENGNIVCGEKNPCKKQICECDKAAAMCFRDNVKTYKKRNIFYPKSSCTEPTDTC.

The first 16 residues, 1–16 (MRTLWIMAVLLLGVEG), serve as a signal peptide directing secretion. Disulfide bonds link cysteine 42–cysteine 131, cysteine 44–cysteine 60, cysteine 59–cysteine 111, cysteine 65–cysteine 138, cysteine 66–cysteine 104, cysteine 73–cysteine 97, and cysteine 91–cysteine 102.

The protein belongs to the phospholipase A2 family. Group II subfamily. N49 sub-subfamily. As to quaternary structure, homodimer; non-covalently linked. As to expression, expressed by the venom gland.

It localises to the secreted. Snake venom phospholipase A2 (PLA2) that exhibits potent myotoxic activity causing inflammatory cell infiltration, severe myoedema, myonecrosis and myolysis in the gastrocnemius muscles of BALB/c mice. The chain is Basic phospholipase A2 homolog TM-N49 from Protobothrops mucrosquamatus (Taiwan habu).